We begin with the raw amino-acid sequence, 669 residues long: MKIFVGNVDGADTTPEELAALFAPYGTVMSCAVMKQFAFVHMRENAGALRAIEALHGHELRPGRALVVEMSRPRPLNTWKIFVGNVSAACTSQELRSLFERRGRVIECDVVKDYAFVHMEKEADAKAAIAQLNGKEVKGKRINVELSTKGQKKGPGLAVQSGDKTKKPGAGDTAFPGTGGFSATFDYQQAFGNSTGGFDGQARQPTPPFFGRDRSPLRRSPPRASYVAPLTAQPATYRAQPSVSLGAAYRAQPSASLGVGYRTQPMTAQAASYRAQPSVSLGAPYRGQLASPSSQSAAASSLGPYGGAQPSASALSSYGGQAAAASSLNSYGAQGSSLASYGNQPSSYGAQAASSYGVRAAASSYNTQGAASSLGSYGAQAASYGAQSAASSLAYGAQAASYNAQPSASYNAQSAPYAAQQAASYSSQPAAYVAQPATAAAYASQPAAYAAQATTPMAGSYGAQPVVQTQLNSYGAQASMGLSGSYGAQSAAAATGSYGAAAAYGAQPSATLAAPYRTQSSASLAASYAAQQHPQAAASYRGQPGNAYDGAGQPSAAYLSMSQGAVANANSTPPPYERTRLSPPRASYDDPYKKAVAMSKRYGSDRRLAELSDYRRLSESQLSFRRSPTKSSLDYRRLPDAHSDYARYSGSYNDYLRAAQMHSGYQRRM.

2 RRM domains span residues M1–P73 and W79–K149. Glycyl lysine isopeptide (Lys-Gly) (interchain with G-Cter in SUMO2) cross-links involve residues K126, K135, K138, K149, and K153. Disordered regions lie at residues S147–F175 and N193–A232. S161 bears the Phosphoserine mark. Position 164 is an N6-acetyllysine; alternate (K164). A Glycyl lysine isopeptide (Lys-Gly) (interchain with G-Cter in SUMO2); alternate cross-link involves residue K164. At T206 the chain carries Phosphothreonine. Phosphoserine occurs at positions 220, 242, 244, 256, 272, and 280. The tract at residues P284–G303 is disordered. The span at G287–G303 shows a compositional bias: low complexity. The TRBP-interacting domain; interaction with STIL stretch occupies residues G307 to S354. A phosphoserine mark is found at S520, S523, S527, and S562. The segment at V566–D590 is disordered. Phosphothreonine is present on T572. S582 is subject to Phosphoserine. K600 participates in a covalent cross-link: Glycyl lysine isopeptide (Lys-Gly) (interchain with G-Cter in SUMO2). A phosphoserine mark is found at S618, S620, S623, S627, S643, and S649.

Isoform 1: Interacts with NCOA6, CITED1 and XRCC5/KU86. Isoform 1: Interacts with SS18 isoform 1. Isoform 1: Interacts with SS18 isoform 2. Interacts with STIL and interferes with its interaction with CPAP. Interacts with gamma-tubulin. Part of the HDP-RNP complex composed of at least HEXIM1, PRKDC, XRCC5, XRCC6, paraspeckle proteins (SFPQ, NONO, PSPC1, RBM14, and MATR3) and NEAT1 RNA. Interacts with RBPMS; the interaction allows cooperative assembly of RNA-bound stable cell-specific alternative splicing regulatory complexes. Expressed in all tissues tested, including brain, heart, skeletal muscle, colon, thymus, spleen, kidney, liver, small intestine, placenta, lung and peripheral blood lymphocytes.

It localises to the nucleus. It is found in the nucleolus. Its subcellular location is the cytoplasm. In terms of biological role, isoform 1 may function as a nuclear receptor coactivator, enhancing transcription through other coactivators such as NCOA6 and CITED1. Isoform 2, functions as a transcriptional repressor, modulating transcriptional activities of coactivators including isoform 1, NCOA6 and CITED1. Regulates centriole biogenesis by suppressing the formation of aberrant centriolar protein complexes in the cytoplasm and thus preserving mitotic spindle integrity. Prevents the formation of the STIL-CPAP complex (which can induce the formation of aberrant centriolar protein complexes) by interfering with the interaction of STIL with CPAP. Plays a role in the regulation of DNA virus-mediated innate immune response by assembling into the HDP-RNP complex, a complex that serves as a platform for IRF3 phosphorylation and subsequent innate immune response activation through the cGAS-STING pathway. Also involved in the regulation of pre-mRNA alternative splicing. This Homo sapiens (Human) protein is RNA-binding protein 14 (RBM14).